The following is a 417-amino-acid chain: Serine hydroxymethyltransferase 1 (417 aa).

(6S)-5,6,7,8-tetrahydrofolate is bound by residues leucine 121 and 125–127 (GHL). The residue at position 229 (lysine 229) is an N6-(pyridoxal phosphate)lysine. 354 to 356 (SPF) provides a ligand contact to (6S)-5,6,7,8-tetrahydrofolate.

The protein belongs to the SHMT family. In terms of assembly, homodimer. Pyridoxal 5'-phosphate is required as a cofactor.

It localises to the cytoplasm. The catalysed reaction is (6R)-5,10-methylene-5,6,7,8-tetrahydrofolate + glycine + H2O = (6S)-5,6,7,8-tetrahydrofolate + L-serine. Its pathway is one-carbon metabolism; tetrahydrofolate interconversion. It functions in the pathway amino-acid biosynthesis; glycine biosynthesis; glycine from L-serine: step 1/1. Its function is as follows. Catalyzes the reversible interconversion of serine and glycine with tetrahydrofolate (THF) serving as the one-carbon carrier. This reaction serves as the major source of one-carbon groups required for the biosynthesis of purines, thymidylate, methionine, and other important biomolecules. Also exhibits THF-independent aldolase activity toward beta-hydroxyamino acids, producing glycine and aldehydes, via a retro-aldol mechanism. The sequence is that of Serine hydroxymethyltransferase 1 from Pseudomonas fluorescens (strain ATCC BAA-477 / NRRL B-23932 / Pf-5).